Here is a 359-residue protein sequence, read N- to C-terminus: Phosphate acyltransferase (359 aa).

A disordered region spans residues 338–359 (LEGAAGRAARPPPPRRASSHDA).

This sequence belongs to the PlsX family. Homodimer. Probably interacts with PlsY.

The protein localises to the cytoplasm. The enzyme catalyses a fatty acyl-[ACP] + phosphate = an acyl phosphate + holo-[ACP]. The protein operates within lipid metabolism; phospholipid metabolism. Catalyzes the reversible formation of acyl-phosphate (acyl-PO(4)) from acyl-[acyl-carrier-protein] (acyl-ACP). This enzyme utilizes acyl-ACP as fatty acyl donor, but not acyl-CoA. The polypeptide is Phosphate acyltransferase (Anaeromyxobacter sp. (strain Fw109-5)).